The sequence spans 598 residues: Elongation factor 4 (598 aa).

Residues Asn2–Gln184 enclose the tr-type G domain. GTP contacts are provided by residues Asp14–Thr19 and Asn131–Asp134.

This sequence belongs to the TRAFAC class translation factor GTPase superfamily. Classic translation factor GTPase family. LepA subfamily.

The protein localises to the cell membrane. It catalyses the reaction GTP + H2O = GDP + phosphate + H(+). Required for accurate and efficient protein synthesis under certain stress conditions. May act as a fidelity factor of the translation reaction, by catalyzing a one-codon backward translocation of tRNAs on improperly translocated ribosomes. Back-translocation proceeds from a post-translocation (POST) complex to a pre-translocation (PRE) complex, thus giving elongation factor G a second chance to translocate the tRNAs correctly. Binds to ribosomes in a GTP-dependent manner. The protein is Elongation factor 4 of Wolbachia sp. subsp. Drosophila simulans (strain wRi).